The chain runs to 412 residues: Multidrug resistance protein MdtG (412 aa).

The next 10 helical transmembrane spans lie at 20-40 (LFVAWIGCFLTGAAFSLIMPF), 62-82 (LVFSITFLFSAIASPFWGGLA), 96-116 (LGMSIVMVLMGFAQNIWQFLI), 119-139 (ALLGLLGGFVPNANALIATQI), 150-170 (TLSTGGVSGALLGPLVGGLLA), 177-197 (PVFFITASVLFLCFIMTLYFI), 225-245 (VLCLFVTTMIIQVATGSIAPI), 260-280 (LAFISGMIASVPGVAALMSAP), 294-314 (ILVAMMALSVLLLIPMALVQT), and 382-402 (TVFFVTAMVVLFNAGYSYWCL).

The protein belongs to the major facilitator superfamily. DHA1 family. MdtG (TC 2.A.1.2.20) subfamily.

Its subcellular location is the cell inner membrane. The chain is Multidrug resistance protein MdtG from Rahnella sp. (strain Y9602).